The chain runs to 255 residues: tRNA (guanine-N(1)-)-methyltransferase (255 aa).

S-adenosyl-L-methionine is bound by residues Gly-113 and 133–138 (IGDYVL).

Belongs to the RNA methyltransferase TrmD family. In terms of assembly, homodimer.

Its subcellular location is the cytoplasm. It catalyses the reaction guanosine(37) in tRNA + S-adenosyl-L-methionine = N(1)-methylguanosine(37) in tRNA + S-adenosyl-L-homocysteine + H(+). Specifically methylates guanosine-37 in various tRNAs. The sequence is that of tRNA (guanine-N(1)-)-methyltransferase from Enterobacter sp. (strain 638).